Consider the following 170-residue polypeptide: MKFKKTIGAMALTTMFVAVSASAVEKNITVTASVDPVIDLLQADGNALPSAVKLAYSPASKTFESYRVMTQVHTNDATKKVIVKLADTPQLTDVLNSTVQMPISVSWGGQVLSTTAKEFEAAALGYSASGVNGVSSSQELVISAAPKTAGTAPTAGNYSGVVSLVMTLGS.

The signal sequence occupies residues 1-23; it reads MKFKKTIGAMALTTMFVAVSASA.

It belongs to the fimbrial CS1 protein family. As to quaternary structure, CFA/I fimbriae are rather rigid, thread-like filaments of 0.5-1 micrometer, with an apparent axial hole, and a diameter of 7 nanometers. A single CFA/I fimbria consists of about 100 identical protein subunits.

It is found in the fimbrium. Its function is as follows. Fimbriae (also called pili), polar filaments radiating from the surface of the bacterium to a length of 0.5-1.5 micrometers and numbering 100-300 per cell, enable bacteria to colonize the epithelium of specific host organs. This Escherichia coli O78:H11 (strain H10407 / ETEC) protein is CFA/I fimbrial subunit B (cfaB).